The primary structure comprises 1025 residues: Beta-galactosidase (1025 aa).

Substrate contacts are provided by Asn-103 and Asp-202. A Na(+)-binding site is contributed by Asp-202. Glu-417, His-419, and Glu-462 together coordinate Mg(2+). Residues Glu-462 and 538-541 each bind substrate; that span reads EYAH. Glu-462 functions as the Proton donor in the catalytic mechanism. The Nucleophile role is filled by Glu-538. Asn-598 contacts Mg(2+). Positions 602 and 605 each coordinate Na(+). Residues Asn-605 and Trp-1003 each coordinate substrate.

The protein belongs to the glycosyl hydrolase 2 family. As to quaternary structure, homotetramer. Mg(2+) serves as cofactor. It depends on Na(+) as a cofactor.

It carries out the reaction Hydrolysis of terminal non-reducing beta-D-galactose residues in beta-D-galactosides.. The chain is Beta-galactosidase from Citrobacter koseri (strain ATCC BAA-895 / CDC 4225-83 / SGSC4696).